Here is a 170-residue protein sequence, read N- to C-terminus: Adenine phosphoribosyltransferase (170 aa).

The protein belongs to the purine/pyrimidine phosphoribosyltransferase family. In terms of assembly, homodimer.

The protein resides in the cytoplasm. The enzyme catalyses AMP + diphosphate = 5-phospho-alpha-D-ribose 1-diphosphate + adenine. The protein operates within purine metabolism; AMP biosynthesis via salvage pathway; AMP from adenine: step 1/1. Its function is as follows. Catalyzes a salvage reaction resulting in the formation of AMP, that is energically less costly than de novo synthesis. The protein is Adenine phosphoribosyltransferase of Mycoplasmopsis pulmonis (strain UAB CTIP) (Mycoplasma pulmonis).